Consider the following 134-residue polypeptide: Tail assembly protein Gp24 (134 aa).

It belongs to the L5likevirus tail assembly protein family. As to quaternary structure, interacts with tail assembly protein Gp25 and tape measure protein.

Its function is as follows. Promotes tail assembly by creating a scaffold for the tail tube proteins. The tail assembly proteins Gp24 and Gp25 would wrap the linear tape measure protein to create a tail assembly scaffold. It would allow polymerization of tail tube protein during which Gp24 and Gp25 are released and therefore are absent from the mature virion. The tail assembly protein Gp25 is produced by a rare -1 ribosomal frameshift. The ratio Gp24/Gp25 is important for proper tail assembly. The polypeptide is Tail assembly protein Gp24 (24) (Mycobacterium (Mycobacteriophage D29)).